The sequence spans 347 residues: Heat-inducible transcription repressor HrcA (347 aa).

The protein belongs to the HrcA family.

Its function is as follows. Negative regulator of class I heat shock genes (grpE-dnaK-dnaJ and groELS operons). Prevents heat-shock induction of these operons. The polypeptide is Heat-inducible transcription repressor HrcA (Laribacter hongkongensis (strain HLHK9)).